Consider the following 217-residue polypeptide: 4-hydroxy-tetrahydrodipicolinate reductase (217 aa).

Residues 7–12 (GFKGKM), 71–73 (GTT), and 95–98 (SYNF) each bind NAD(+). H127 (proton donor/acceptor) is an active-site residue. H128 is a (S)-2,3,4,5-tetrahydrodipicolinate binding site. The active-site Proton donor is the K131. 137 to 138 (GT) lines the (S)-2,3,4,5-tetrahydrodipicolinate pocket.

The protein belongs to the DapB family.

It localises to the cytoplasm. The enzyme catalyses (S)-2,3,4,5-tetrahydrodipicolinate + NAD(+) + H2O = (2S,4S)-4-hydroxy-2,3,4,5-tetrahydrodipicolinate + NADH + H(+). It catalyses the reaction (S)-2,3,4,5-tetrahydrodipicolinate + NADP(+) + H2O = (2S,4S)-4-hydroxy-2,3,4,5-tetrahydrodipicolinate + NADPH + H(+). It participates in amino-acid biosynthesis; L-lysine biosynthesis via DAP pathway; (S)-tetrahydrodipicolinate from L-aspartate: step 4/4. Its function is as follows. Catalyzes the conversion of 4-hydroxy-tetrahydrodipicolinate (HTPA) to tetrahydrodipicolinate. This chain is 4-hydroxy-tetrahydrodipicolinate reductase, found in Thermosipho africanus (strain TCF52B).